The following is a 435-amino-acid chain: Enolase (435 aa).

Substrate contacts are provided by histidine 155 and glutamate 164. Glutamate 205 serves as the catalytic Proton donor. Positions 243, 292, and 319 each coordinate Mg(2+). Substrate-binding positions include glutamate 292, aspartate 319, lysine 344, 371-374 (SHRS), and lysine 395. Catalysis depends on lysine 344, which acts as the Proton acceptor.

Belongs to the enolase family. In terms of assembly, homooctamer. Mg(2+) is required as a cofactor.

The protein resides in the cytoplasm. Its subcellular location is the secreted. It is found in the cell surface. It carries out the reaction (2R)-2-phosphoglycerate = phosphoenolpyruvate + H2O. It functions in the pathway carbohydrate degradation; glycolysis; pyruvate from D-glyceraldehyde 3-phosphate: step 4/5. Functionally, catalyzes the reversible conversion of 2-phosphoglycerate (2-PG) into phosphoenolpyruvate (PEP). It is essential for the degradation of carbohydrates via glycolysis. In terms of biological role, 'Moonlights' as a plasminogen receptor and plasmin activator. Binds host (human) plasminogen in vitro; enhances the activity of host tissue-specific plasminogen activator (tPA). The chain is Enolase from Streptococcus pyogenes serotype M1.